The chain runs to 310 residues: Transcription initiation factor IIA subunit 1 (310 aa).

Disordered stretches follow at residues 52–78 (AISN…LSTV), 91–197 (IQLN…NNKD), and 218–261 (VIPQ…DDPD). 2 stretches are compositionally biased toward low complexity: residues 62–77 (TTAT…TLST) and 122–160 (SNGT…PSSL). Acidic residues-rich tracts occupy residues 173-183 (TLDESDNDDDN), 225-236 (LNDDDDLDDEEI), and 246-261 (DSLG…DDPD).

It belongs to the TFIIA subunit 1 family. As to quaternary structure, TFIIA is a heterodimer of the large subunit 1 and a small subunit gamma.

The protein resides in the nucleus. Its function is as follows. TFIIA is a component of the transcription machinery of RNA polymerase II and plays an important role in transcriptional activation. TFIIA in a complex with tbp mediates transcriptional activity. This Dictyostelium discoideum (Social amoeba) protein is Transcription initiation factor IIA subunit 1 (gtf2a1).